The sequence spans 585 residues: Bestrophin-1 (585 aa).

Residues 1 to 31 (MTITYTSQVANARLGSFSRLLLCWRGSIYKL) are Cytoplasmic-facing. Residue A10 coordinates Ca(2+). A helical membrane pass occupies residues 32–51 (LYGEFFIFLLCYYIIRFIYR). Over 52–60 (LALTEEQQL) the chain is Extracellular. Residues 61 to 82 (MFEKLTLYCDSYIQLIPISFVL) traverse the membrane as a helical segment. At 83–237 (GFYVTLVVTR…DWISIPLVYT (155 aa)) the chain is on the cytoplasmic side. A helical membrane pass occupies residues 238-255 (QVVTVAVYSFFLTCLVGR). Topologically, residues 256-274 (QFLNPAKAYPGHELDLVVP) are extracellular. The chain crosses the membrane as a helical span at residues 275–288 (VFTFLQFFFYVGWL). Residues 289 to 585 (KVAEQLINPF…ALENRDEAHS (297 aa)) are Cytoplasmic-facing. Q293, N296, D301, and D304 together coordinate Ca(2+). The auto-inhibitory segment stretch occupies residues 346-379 (PYTAASAQFRRASFMGSTFNISLNKEEMEFQPNQ).

Belongs to the anion channel-forming bestrophin (TC 1.A.46) family. Calcium-sensitive chloride channel subfamily. Interacts with YWHAG; this interaction promotes the ligand-gated L-glutamate channel activity leading to the positive regulation of NMDA glutamate receptor activity through the L-glutamate secretion.

The protein localises to the cell membrane. It localises to the basolateral cell membrane. It carries out the reaction chloride(in) = chloride(out). The enzyme catalyses hydrogencarbonate(in) = hydrogencarbonate(out). It catalyses the reaction 4-aminobutanoate(in) = 4-aminobutanoate(out). The catalysed reaction is L-glutamate(out) = L-glutamate(in). Functionally, ligand-gated anion channel that allows the movement of anions across cell membranes when activated by calcium (Ca2+). Allows the movement of chloride and hydrogencarbonate. Found in a partially open conformation leading to significantly smaller chloride movement. Upon F2R/PAR-1 activation, the sequestered calcium is released into the cytosol of astrocytes, leading to the (Ca2+)-dependent release of L-glutamate into the synaptic cleft that targets the neuronal postsynaptic GRIN2A/NMDAR receptor resulting in the synaptic plasticity regulation. Upon activation of the norepinephrine-alpha-1 adrenergic receptor signaling pathway, transports as well D-serine than L-glutamate in a (Ca2+)-dependent manner, leading to activation of adjacent NMDAR receptors and therefore regulates the heterosynaptic long-term depression and metaplasticity during initial memory acquisition. Releases the 4-aminobutanoate neurotransmitter in a (Ca2+)-dependent manner, and participates in its tonic release from cerebellar glial cells. The protein is Bestrophin-1 (BEST1) of Macaca fascicularis (Crab-eating macaque).